A 467-amino-acid polypeptide reads, in one-letter code: ADAM DEC1 (467 aa).

The N-terminal stretch at 1–33 (MLPGTSRLPTEASMSWVLLSVLWLIIQIQVIDA) is a signal peptide. Positions 34-208 (TLTPELKPHE…LRTSRSLKNP (175 aa)) are excised as a propeptide. N-linked (GlcNAc...) asparagine glycosylation is found at asparagine 61 and asparagine 236. Residues 217–411 (KYIGLFLVLD…RNARCLLLAP (195 aa)) form the Peptidase M12B domain. 2 disulfides stabilise this stretch: cysteine 327/cysteine 406 and cysteine 368/cysteine 373. Position 351 (histidine 351) interacts with Zn(2+). The active site involves glutamate 352. Positions 355 and 361 each coordinate Zn(2+). The region spanning 418–467 (KPTCGNQVLDVGEECDCGSPEECTNLCCEPLTCRLKSQPDCSEASNHITE) is the Disintegrin domain.

It depends on Zn(2+) as a cofactor. In terms of tissue distribution, expressed highly in uterus during pregnancy.

It is found in the secreted. Its function is as follows. May play an important role in the control of the immune response and during pregnancy. The sequence is that of ADAM DEC1 (Adamdec1) from Mus musculus (Mouse).